The following is a 202-amino-acid chain: MAEESTDFSQFEEERNNDQYKVSAKKTVDEYKNLDAEDESLAKWKESLGLSSDVLPLEFPGDKRKVVVQKIQLLVNTEPNPITFDLTNEKTIKELASKRYKIKENSIYKLKIVFKVQHEIITGLRYVQYIKKAGIAVDKIDDHLGSYAPNTKTKPFYEVELPESEAPSGFLARGNYSAVSKFIDDDKTNHLTLNWGVEIVKK.

At alanine 2 the chain carries N-acetylalanine. Residue threonine 27 is modified to Phosphothreonine. A Phosphoserine modification is found at serine 40.

This sequence belongs to the Rho GDI family.

It is found in the cytoplasm. Its function is as follows. Regulates the GDP/GTP exchange reaction of the Rho proteins by inhibiting the dissociation of GDP from them, and the subsequent binding of GTP to them. This is Rho GDP-dissociation inhibitor (RDI1) from Saccharomyces cerevisiae (strain ATCC 204508 / S288c) (Baker's yeast).